We begin with the raw amino-acid sequence, 301 residues long: MKITRIYVRLMAISLSRKLIDYIKLSKPRVISLLDLAAIAGFVLGLPKAINITSIIVSFLAVIIGGSLASGGGMIINGGLEIEKDKKMKRTSWRPTVKGEVGRKEAYAIGSIFIVVGTLIGFLANPLTALFIALGAFIYVVIYSIWLKPRTWWNIVIGGFAGSAAAWAGFAASSGSFTLLSFLLGFLIFMWTPGHFWSLALRFRDDYKNAEIPMLPVLTDERTSAKAIAISNALMVPFALLIGLYAGLIYLIVSTIVSAFLLYVSVKLYLNPTADEAWESFKLSSPYLAIILLTLIIVKLI.

The next 8 membrane-spanning stretches (helical) occupy residues 30-50, 55-75, 106-126, 127-147, 152-172, 177-197, 233-253, and 281-301; these read VISL…PKAI, IIVS…GGMI, AYAI…LANP, LTAL…SIWL, WWNI…GFAA, FTLL…GHFW, ALMV…YLIV, and FKLS…VKLI.

Belongs to the UbiA prenyltransferase family. Protoheme IX farnesyltransferase subfamily.

The protein localises to the cell membrane. It carries out the reaction heme b + (2E,6E)-farnesyl diphosphate + H2O = Fe(II)-heme o + diphosphate. It participates in porphyrin-containing compound metabolism; heme O biosynthesis; heme O from protoheme: step 1/1. Its function is as follows. Converts heme B (protoheme IX) to heme O by substitution of the vinyl group on carbon 2 of heme B porphyrin ring with a hydroxyethyl farnesyl side group. The sequence is that of Protoheme IX farnesyltransferase from Sulfurisphaera tokodaii (strain DSM 16993 / JCM 10545 / NBRC 100140 / 7) (Sulfolobus tokodaii).